We begin with the raw amino-acid sequence, 692 residues long: Protein adenylyltransferase SelO-1, mitochondrial (692 aa).

Residues 1 to 24 constitute a mitochondrion transit peptide; sequence MASVGSRLTRFYISRPGVIARRFL. 7 residues coordinate ATP: Gly142, Gly144, Lys176, Asp188, Gly189, Arg246, and Arg253. The active-site Proton acceptor is the Asp337. Positions 338 and 347 each coordinate Mg(2+). Asp347 contributes to the ATP binding site. Residues 637-676 form a disordered region; that stretch reads LEQPGWMGRGGAAIPGERDETEEEGSNSSGAGARGLVPYD. A non-standard amino acid (selenocysteine) is located at residue Sec690.

Belongs to the SELO family. Mg(2+) serves as cofactor.

It is found in the mitochondrion. The catalysed reaction is L-tyrosyl-[protein] + ATP = O-(5'-adenylyl)-L-tyrosyl-[protein] + diphosphate. It carries out the reaction L-threonyl-[protein] + ATP = 3-O-(5'-adenylyl)-L-threonyl-[protein] + diphosphate. It catalyses the reaction L-seryl-[protein] + ATP = 3-O-(5'-adenylyl)-L-seryl-[protein] + diphosphate. Catalyzes the transfer of adenosine 5'-monophosphate (AMP) to Ser, Thr and Tyr residues of target proteins (AMPylation). May be a redox-active mitochondrial selenoprotein which interacts with a redox target protein. In Danio rerio (Zebrafish), this protein is Protein adenylyltransferase SelO-1, mitochondrial.